Consider the following 559-residue polypeptide: Neutral amino acid transporter 9 (559 aa).

The Cytoplasmic segment spans residues 1–118 (MANVDSDSRH…YTEGYRKNTS (118 aa)). The chain crosses the membrane as a helical span at residues 119–139 (LVTIFMIWNTMMGTSILSIPW). The tract at residues 128-133 (TMMGTS) is important for arginine binding and amino acid transport. Ser133 contacts arginine. Residues 140-145 (GIKQAG) are Lumenal-facing. Residues 146-166 (FTTGMCVIVLMGLLTLYCCYR) form a helical membrane-spanning segment. The Cytoplasmic portion of the chain corresponds to 167-197 (VVKSRSMIVTSDTTTWEYPDVCKHYFGSFGQ). A helical membrane pass occupies residues 198-224 (WSSLLFSLVSLIGAMIVYWVLMSNFLF). At 225–281 (NTGKFIFNFIHHINDTDTVLSTNNSSPVICPSAGSGHPDNSSMIFYNSDTEVRLFER) the chain is on the lumenal side. N-linked (GlcNAc...) asparagine glycosylation is found at Asn238, Asn247, and Asn264. A disulfide bridge connects residues Cys254 and Cys422. The helical transmembrane segment at 282 to 298 (WWDKSKTVPFYLIGLLL) threads the bilayer. The Cytoplasmic portion of the chain corresponds to 299 to 307 (PLLNFKSPS). A helical transmembrane segment spans residues 308–332 (FFSKFNILGTVSVLYLIFIVTLKAI). The Lumenal portion of the chain corresponds to 333–354 (RLGFHLEFHWFAPTEFFVPEIR). Residues 355 to 375 (AQFPQLTGVLTLAFFIHNCII) traverse the membrane as a helical segment. Residues 376-392 (TLLKNNKNQENNVRDLC) lie on the Cytoplasmic side of the membrane. A helical transmembrane segment spans residues 393 to 413 (IAYMLVTLTYLYIGVLVFASF). The Lumenal segment spans residues 414 to 435 (PSPPLPKDCIEQNFLDNFPSSD). The helical transmembrane segment at 436-456 (TLSFIARICLLFQMMTVYPLL) threads the bilayer. The CARC motif signature appears at 442–452 (RICLLFQMMTV). The CRAC motif motif lies at 455–461 (LLGYLAR). At 457–477 (GYLARVQLLGHIFGDIYPSIF) the chain is on the cytoplasmic side. A helical membrane pass occupies residues 478-498 (HVLILNLIIVGAGVTMACFYP). At 499 to 505 (NIGGIIR) the chain is on the lumenal side. A helical transmembrane segment spans residues 506-526 (YSGAACGLAFVFIYPSLIYIL). Residues 527–538 (SQHQEERLTWPK) are Cytoplasmic-facing. The chain crosses the membrane as a helical span at residues 539 to 559 (LVFHIIIIILGLANLIAQFFM).

It belongs to the amino acid/polyamine transporter 2 family. SLC38A9 subfamily. In terms of assembly, associated component of the Ragulator complex (composed of LAMTOR1, LAMTOR2, LAMTOR3, LAMTOR4 and LAMTOR5). Associated component of the Rag GTPases heterodimers (composed of RRAGA, RRAGB, RRAGC and RRAGD); this interaction is independent of the Ragulator complex but depends on the nucleotide loading state of the Rag GTPase heterodimer. Interacts with TM4SF5. Interacts with NPC1; this interaction inhibits cholesterol-mediated mTORC1 activation via its sterol transport activity. Glycosylated.

It is found in the lysosome membrane. The protein resides in the late endosome membrane. The catalysed reaction is L-leucine(in) = L-leucine(out). It carries out the reaction L-tyrosine(in) = L-tyrosine(out). The enzyme catalyses L-glutamine(out) = L-glutamine(in). It catalyses the reaction L-asparagine(out) = L-asparagine(in). Functionally, lysosomal amino acid transporter involved in the activation of mTORC1 in response to amino acid levels. Probably acts as an amino acid sensor of the Rag GTPases and Ragulator complexes, 2 complexes involved in amino acid sensing and activation of mTORC1, a signaling complex promoting cell growth in response to growth factors, energy levels, and amino acids. Following activation by amino acids, the Ragulator and Rag GTPases function as a scaffold recruiting mTORC1 to lysosomes where it is in turn activated. SLC38A9 mediates transport of amino acids with low capacity and specificity with a slight preference for polar amino acids. Acts as an arginine sensor. Following activation by arginine binding, mediates transport of L-glutamine, leucine and tyrosine with high efficiency, and is required for the efficient utilization of these amino acids after lysosomal protein degradation. However, the transport mechanism is not well defined and the role of sodium is not clear. Can disassemble the lysosomal folliculin complex (LFC), and thereby triggers GAP activity of FLCN:FNIP2 toward RRAGC. Acts as an cholesterol sensor that conveys increases in lysosomal cholesterol, leading to lysosomal recruitment and activation of mTORC1 via the Rag GTPases. Guanine exchange factor (GEF) that, upon arginine binding, stimulates GDP release from RRAGA and therefore activates the Rag GTPase heterodimer and the mTORC1 pathway in response to nutrient sufficiency. This is Neutral amino acid transporter 9 from Rattus norvegicus (Rat).